A 293-amino-acid chain; its full sequence is Ribosomal protein L11 methyltransferase (293 aa).

Positions 145, 166, 188, and 230 each coordinate S-adenosyl-L-methionine.

It belongs to the methyltransferase superfamily. PrmA family.

The protein resides in the cytoplasm. It catalyses the reaction L-lysyl-[protein] + 3 S-adenosyl-L-methionine = N(6),N(6),N(6)-trimethyl-L-lysyl-[protein] + 3 S-adenosyl-L-homocysteine + 3 H(+). Functionally, methylates ribosomal protein L11. The chain is Ribosomal protein L11 methyltransferase from Shewanella baltica (strain OS223).